The following is a 324-amino-acid chain: uncharacterized protein (324 aa).

Positions 6–63 (LKYRELKIISVIAASENISHAATVLGIAQANVSKYLADFESKVGLKVFDRTTRQLMLT) constitute an HTH lysR-type domain. The segment at residues 23 to 42 (ISHAATVLGIAQANVSKYLA) is a DNA-binding region (H-T-H motif).

This sequence belongs to the LysR transcriptional regulatory family.

This is an uncharacterized protein from Escherichia coli (strain K12).